The chain runs to 676 residues: ATP-dependent RNA helicase dbp-9 (676 aa).

The tract at residues 1-97 is disordered; sequence MAKRKLNETD…SEKDDADLTF (97 aa). Residues 70–90 show a composition bias toward basic and acidic residues; the sequence is QQLKDEQKQQDEKDEKKQSEK. The Q motif signature appears at 95–123; that stretch reads LTFSDLGLDPRLVQAVAKQSFEKPTLVQR. Residues 126-304 form the Helicase ATP-binding domain; it reads IPLALAGQDV…KGFFCRNPTM (179 aa). Position 139-146 (139-146) interacts with ATP; it reads AKTGSGKT. Residues 251–254 carry the DEAD box motif; it reads DEAD. A Helicase C-terminal domain is found at 317-541; that stretch reads KLTQFYVKCG…PYNFNKDQME (225 aa). A compositionally biased stretch (basic and acidic residues) spans 410–432; it reads EDEKTEEKKEEQGEKKEGDEKKN. Disordered stretches follow at residues 410–444 and 633–676; these read EDEKTEEKKEEQGEKKEGDEKKNGKGKKKKGRRDQ and FKKQ…RVRK. Over residues 642 to 663 the composition is skewed to basic residues; the sequence is TRGKKGAKGGKGGHGKYKKGPG.

The protein belongs to the DEAD box helicase family. DDX56/DBP9 subfamily.

It is found in the nucleus. Its subcellular location is the nucleolus. It carries out the reaction ATP + H2O = ADP + phosphate + H(+). Its function is as follows. ATP-binding RNA helicase involved in the biogenesis of 60S ribosomal subunits and is required for the normal formation of 25S and 5.8S rRNAs. The chain is ATP-dependent RNA helicase dbp-9 (dbp-9) from Neurospora crassa (strain ATCC 24698 / 74-OR23-1A / CBS 708.71 / DSM 1257 / FGSC 987).